The following is an 805-amino-acid chain: Translation initiation factor IF-2 (805 aa).

2 disordered regions span residues 68–89 (VVTE…EKKE) and 141–215 (KEKE…KEKK). The segment covering 79–89 (VEEKKEEEKKE) has biased composition (basic and acidic residues). A tr-type G domain is found at 306–474 (PRPPIVVVMG…MILLLADILE (169 aa)). A G1 region spans residues 315-322 (GHVDHGKT). 315 to 322 (GHVDHGKT) serves as a coordination point for GTP. The G2 stretch occupies residues 340–344 (GITQH). Positions 362 to 365 (DTPG) are G3. GTP contacts are provided by residues 362-366 (DTPGH) and 416-419 (NKID). The interval 416–419 (NKID) is G4. The tract at residues 452 to 454 (SAK) is G5.

Belongs to the TRAFAC class translation factor GTPase superfamily. Classic translation factor GTPase family. IF-2 subfamily.

The protein resides in the cytoplasm. Functionally, one of the essential components for the initiation of protein synthesis. Protects formylmethionyl-tRNA from spontaneous hydrolysis and promotes its binding to the 30S ribosomal subunits. Also involved in the hydrolysis of GTP during the formation of the 70S ribosomal complex. The protein is Translation initiation factor IF-2 (infB) of Aquifex aeolicus (strain VF5).